We begin with the raw amino-acid sequence, 547 residues long: Chaperonin GroEL (547 aa).

ATP contacts are provided by residues 30–33 (TLGP), Lys-51, 87–91 (DGTTT), Gly-415, 479–481 (NAA), and Asp-495. The segment at 525 to 547 (PKEDSPGAGAGMGGMGGMGGMDM) is disordered. Positions 532–547 (AGAGMGGMGGMGGMDM) are enriched in gly residues.

This sequence belongs to the chaperonin (HSP60) family. In terms of assembly, forms a cylinder of 14 subunits composed of two heptameric rings stacked back-to-back. Interacts with the co-chaperonin GroES.

It localises to the cytoplasm. The enzyme catalyses ATP + H2O + a folded polypeptide = ADP + phosphate + an unfolded polypeptide.. Functionally, together with its co-chaperonin GroES, plays an essential role in assisting protein folding. The GroEL-GroES system forms a nano-cage that allows encapsulation of the non-native substrate proteins and provides a physical environment optimized to promote and accelerate protein folding. The sequence is that of Chaperonin GroEL from Nitrosomonas europaea (strain ATCC 19718 / CIP 103999 / KCTC 2705 / NBRC 14298).